We begin with the raw amino-acid sequence, 107 residues long: Cytochrome c oxidase assembly protein COX16 homolog, mitochondrial (107 aa).

Topologically, residues 1 to 14 are mitochondrial matrix; it reads MFGYAVRRALRKSK. Residues 15–37 form a helical membrane-spanning segment; that stretch reads TLRYGVPMLLLIVGGSFGLREFS. The Mitochondrial intermembrane segment spans residues 38–107; the sequence is QIRYDAVKIK…PEILKTNKTT (70 aa). The tract at residues 80–107 is disordered; it reads NIRGPRPWEDPDLLQGRNPEILKTNKTT.

It belongs to the COX16 family. As to quaternary structure, associates with the MITRAC complex. Interacts with MT-CO2/COX; specifically interacts with newly synthesized MT-CO2/COX. Interacts with SCO1, SCO2 and COA6.

It localises to the mitochondrion inner membrane. Its function is as follows. Required for the assembly of the mitochondrial respiratory chain complex IV (CIV), also known as cytochrome c oxidase. Promotes the insertion of copper into the active site of cytochrome c oxidase subunit II (MT-CO2/COX2). Interacts specifically with newly synthesized MT-CO2/COX and its copper center-forming metallochaperones SCO1, SCO2 and COA6. Probably facilitates MT-CO2/COX2 association with the MITRAC assembly intermediate containing MT-CO1/COX1, thereby participating in merging the MT-CO1/COX1 and MT-CO2/COX2 assembly lines. In Bos taurus (Bovine), this protein is Cytochrome c oxidase assembly protein COX16 homolog, mitochondrial.